Here is a 155-residue protein sequence, read N- to C-terminus: Ubiquitin-conjugating enzyme E2 14 (155 aa).

The UBC core domain maps to 7 to 154; it reads SSSRRLTKEY…ARDYVEQFAK (148 aa). The Glycyl thioester intermediate role is filled by Cys91.

The protein belongs to the ubiquitin-conjugating enzyme family.

It catalyses the reaction S-ubiquitinyl-[E1 ubiquitin-activating enzyme]-L-cysteine + [E2 ubiquitin-conjugating enzyme]-L-cysteine = [E1 ubiquitin-activating enzyme]-L-cysteine + S-ubiquitinyl-[E2 ubiquitin-conjugating enzyme]-L-cysteine.. It functions in the pathway protein modification; protein ubiquitination. Its function is as follows. Catalyzes the covalent attachment of ubiquitin to other proteins. Mediates the selective degradation of short-lived and abnormal proteins. This chain is Ubiquitin-conjugating enzyme E2 14 (ubc14), found in Schizosaccharomyces pombe (strain 972 / ATCC 24843) (Fission yeast).